The sequence spans 499 residues: L-asparagine permease (499 aa).

12 helical membrane passes run 34 to 54 (QVQM…GAGA), 58 to 78 (MAGP…FFIL), 109 to 129 (VAGW…ITAV), 146 to 166 (VFAL…VKWF), 171 to 191 (FWFA…GTVF), 219 to 239 (LLPA…IEMV), 264 to 284 (IGLF…WSAY), 298 to 318 (LGVP…ALSS), 353 to 373 (YAGI…NYLV), 378 to 398 (FEIV…FIIV), 422 to 442 (APFT…LMAF), and 448 to 468 (TYTI…WFGV).

It belongs to the amino acid-polyamine-organocation (APC) superfamily. Amino acid transporter (AAT) (TC 2.A.3.1) family.

The protein localises to the cell inner membrane. The chain is L-asparagine permease (ansP) from Escherichia coli (strain K12).